The following is a 202-amino-acid chain: Large ribosomal subunit protein bL25 (202 aa).

The disordered stretch occupies residues 182 to 202; sequence QTAPEEEEGTAAETTEPELAE. The segment covering 185–202 has biased composition (acidic residues); sequence PEEEEGTAAETTEPELAE.

The protein belongs to the bacterial ribosomal protein bL25 family. CTC subfamily. As to quaternary structure, part of the 50S ribosomal subunit; part of the 5S rRNA/L5/L18/L25 subcomplex. Contacts the 5S rRNA. Binds to the 5S rRNA independently of L5 and L18.

This is one of the proteins that binds to the 5S RNA in the ribosome where it forms part of the central protuberance. The polypeptide is Large ribosomal subunit protein bL25 (Enterococcus faecalis (strain ATCC 700802 / V583)).